A 322-amino-acid polypeptide reads, in one-letter code: Undecaprenyl-phosphate 4-deoxy-4-formamido-L-arabinose transferase (322 aa).

Topologically, residues 1–235 are cytoplasmic; sequence MFEIHPVKKV…TCLTTTPLRM (235 aa). A helical transmembrane segment spans residues 236 to 256; that stretch reads LSLLGSIIAIGGFSIAVLLVI. Topologically, residues 257-269 are periplasmic; sequence LRLTFGPQWAAEG. Residues 270–290 form a helical membrane-spanning segment; sequence VFMLFAVLFTFIGAQFIGMGL. The Cytoplasmic segment spans residues 291-322; it reads LGEYIGRIYTDVRARPRYFVQQVIRPSSKENE.

This sequence belongs to the glycosyltransferase 2 family.

Its subcellular location is the cell inner membrane. The enzyme catalyses UDP-4-deoxy-4-formamido-beta-L-arabinose + di-trans,octa-cis-undecaprenyl phosphate = 4-deoxy-4-formamido-alpha-L-arabinopyranosyl di-trans,octa-cis-undecaprenyl phosphate + UDP. It functions in the pathway glycolipid biosynthesis; 4-amino-4-deoxy-alpha-L-arabinose undecaprenyl phosphate biosynthesis; 4-amino-4-deoxy-alpha-L-arabinose undecaprenyl phosphate from UDP-4-deoxy-4-formamido-beta-L-arabinose and undecaprenyl phosphate: step 1/2. Its pathway is bacterial outer membrane biogenesis; lipopolysaccharide biosynthesis. Functionally, catalyzes the transfer of 4-deoxy-4-formamido-L-arabinose from UDP to undecaprenyl phosphate. The modified arabinose is attached to lipid A and is required for resistance to polymyxin and cationic antimicrobial peptides. In Shigella sonnei (strain Ss046), this protein is Undecaprenyl-phosphate 4-deoxy-4-formamido-L-arabinose transferase.